We begin with the raw amino-acid sequence, 122 residues long: Small ribosomal subunit protein bS6 (122 aa).

It belongs to the bacterial ribosomal protein bS6 family.

In terms of biological role, binds together with bS18 to 16S ribosomal RNA. This chain is Small ribosomal subunit protein bS6, found in Methylibium petroleiphilum (strain ATCC BAA-1232 / LMG 22953 / PM1).